Here is a 443-residue protein sequence, read N- to C-terminus: Glutamine synthetase (443 aa).

One can recognise a GS beta-grasp domain in the interval 16 to 101 (NGVKFIRLQF…LICDVYKPDG (86 aa)). The 336-residue stretch at 108–443 (PRHVLKRANA…WELENYLNKY (336 aa)) folds into the GS catalytic domain. Mg(2+) contacts are provided by glutamate 131 and glutamate 133. ATP is bound at residue glutamate 183. 2 residues coordinate Mg(2+): glutamate 188 and glutamate 195. Residues 239–240 (NG) and glycine 240 each bind L-glutamate. Histidine 244 lines the Mg(2+) pocket. ATP is bound at residue serine 248. The L-glutamate site is built by arginine 297, glutamate 303, and arginine 315. 2 residues coordinate ATP: arginine 315 and arginine 320. Glutamate 332 contributes to the Mg(2+) binding site. Arginine 334 provides a ligand contact to L-glutamate.

The protein belongs to the glutamine synthetase family. In terms of assembly, oligomer of 12 subunits arranged in the form of two hexagons. In its feedback-inhibited form, interacts with TnrA in order to block its DNA-binding activity. Mg(2+) is required as a cofactor.

The protein localises to the cytoplasm. It catalyses the reaction L-glutamate + NH4(+) + ATP = L-glutamine + ADP + phosphate + H(+). Its activity is regulated as follows. Inhibited by glutamine. Functionally, glutamine synthetase (GS) is an unusual multitasking protein that functions as an enzyme, a transcription coregulator, and a chaperone in ammonium assimilation and in the regulation of genes involved in nitrogen metabolism. It catalyzes the ATP-dependent biosynthesis of glutamine from glutamate and ammonia. Feedback-inhibited GlnA also interacts with and regulates the activity of the transcriptional regulator TnrA. During nitrogen limitation, TnrA is in its DNA-binding active state and turns on the transcription of genes required for nitrogen assimilation. Under conditions of nitrogen excess, feedback-inhibited GlnA forms a stable complex with TnrA, which inhibits its DNA-binding activity. In contrast, feedback-inhibited GlnA acts as a chaperone to stabilize the DNA-binding activity of GlnR, which represses the transcription of nitrogen assimilation genes. This Clostridium saccharobutylicum protein is Glutamine synthetase.